Reading from the N-terminus, the 374-residue chain is Peptide chain release factor 2 (374 aa).

N5-methylglutamine is present on Q250.

The protein belongs to the prokaryotic/mitochondrial release factor family. Post-translationally, methylated by PrmC. Methylation increases the termination efficiency of RF2.

The protein localises to the cytoplasm. Its function is as follows. Peptide chain release factor 2 directs the termination of translation in response to the peptide chain termination codons UGA and UAA. The sequence is that of Peptide chain release factor 2 from Beutenbergia cavernae (strain ATCC BAA-8 / DSM 12333 / CCUG 43141 / JCM 11478 / NBRC 16432 / NCIMB 13614 / HKI 0122).